Here is a 710-residue protein sequence, read N- to C-terminus: Homeobox-leucine zipper protein ROC8 (710 aa).

The disordered stretch occupies residues 1–23 (MDFGDEPEGSDSQRRRKRYHRHT). Basic residues predominate over residues 14 to 23 (RRRKRYHRHT). Positions 15 to 74 (RRKRYHRHTPRQIQQLEAMFKECPHPDENQRAQLSRELGLEPRQIKFWFQNRRTQMKAQH) form a DNA-binding region, homeobox. Residues 82–144 (LRAENDKIRC…DRVSNLTSKY (63 aa)) are a coiled coil. In terms of domain architecture, START spans 197 to 440 (SDMERPMMAE…LQRACERYAS (244 aa)). Residues 630–648 (RPGSAAGASTSSAGPLAAA) are compositionally biased toward low complexity. Residues 630-650 (RPGSAAGASTSSAGPLAAARG) are disordered.

Belongs to the HD-ZIP homeobox family. Class IV subfamily.

The protein localises to the nucleus. Its function is as follows. Probable transcription factor. The polypeptide is Homeobox-leucine zipper protein ROC8 (ROC8) (Oryza sativa subsp. japonica (Rice)).